The primary structure comprises 121 residues: Flagellar protein FliT (121 aa).

Residues 1–50 (MNNAPHLYFAWQQLVEKSQLMLRLATEEQWDELIASEMAYVNAVQEIAHL) are required for homodimerization. The fliD binding stretch occupies residues 60-98 (MQEQLRPMLRLILDNESKVKQLLQIRMDELAKLVGQSSV).

This sequence belongs to the FliT family. In terms of assembly, homodimer. Interacts with FliD and FlhC.

The protein resides in the cytoplasm. It is found in the cytosol. Dual-function protein that regulates the transcription of class 2 flagellar operons and that also acts as an export chaperone for the filament-capping protein FliD. As a transcriptional regulator, acts as an anti-FlhDC factor; it directly binds FlhC, thus inhibiting the binding of the FlhC/FlhD complex to class 2 promoters, resulting in decreased expression of class 2 flagellar operons. As a chaperone, effects FliD transition to the membrane by preventing its premature polymerization, and by directing it to the export apparatus. The sequence is that of Flagellar protein FliT from Escherichia coli O9:H4 (strain HS).